A 61-amino-acid chain; its full sequence is Small ribosomal subunit protein uS14B (61 aa).

Residues Cys24, Cys27, Cys40, and Cys43 each contribute to the Zn(2+) site.

The protein belongs to the universal ribosomal protein uS14 family. Zinc-binding uS14 subfamily. In terms of assembly, part of the 30S ribosomal subunit. Contacts proteins S3 and S10. Requires Zn(2+) as cofactor.

Functionally, binds 16S rRNA, required for the assembly of 30S particles and may also be responsible for determining the conformation of the 16S rRNA at the A site. The sequence is that of Small ribosomal subunit protein uS14B from Mycobacterium ulcerans (strain Agy99).